Reading from the N-terminus, the 365-residue chain is Phosphate acyltransferase (365 aa).

This sequence belongs to the PlsX family. In terms of assembly, homodimer. Probably interacts with PlsY.

The protein localises to the cytoplasm. It carries out the reaction a fatty acyl-[ACP] + phosphate = an acyl phosphate + holo-[ACP]. It functions in the pathway lipid metabolism; phospholipid metabolism. Its function is as follows. Catalyzes the reversible formation of acyl-phosphate (acyl-PO(4)) from acyl-[acyl-carrier-protein] (acyl-ACP). This enzyme utilizes acyl-ACP as fatty acyl donor, but not acyl-CoA. The chain is Phosphate acyltransferase from Klebsiella pneumoniae (strain 342).